The primary structure comprises 463 residues: MLPSQSPAIFTVSRLNQTVRLLLEREMGQVWISGEISNFSQPSSGHWYFTLKDDNAQVRCAMFRNSNRRVTFRPQHGQQVLVRANITLYEPRGDYQIIVESMQPAGEGLLQQKYEQLKAQLTAEGLFEQKHKQALPSPAHCVGVITSKTGAALHDILHVLRRRDPGLPVIIYPTSVQGDDAPGQIVRAIALANARQECDVLIVGRGGGSLEDLWSFNDERVARAIFASQIPIVSAVGHETDVTIADFVADLRAPTPSAAAEIVSRNQQELLRQLQSGQQRLEMAMDYFLASRQRRFTQLFHRLQQQHPQLRLARQQTALERLRQRMRIAVESQLKRAEQRQKRTVQRLNHYNPQPRIHRAQSRIQQLEYRLAEIMRGRLSERRERFGNAVTHLEAVSPLATLARGYSVTSVSDGTVLKQTKQVKTGDLLTTRLKDGWVESEVKQIAPVKKTRARKPSPTKPAE.

Belongs to the XseA family. As to quaternary structure, heterooligomer composed of large and small subunits.

The protein localises to the cytoplasm. It catalyses the reaction Exonucleolytic cleavage in either 5'- to 3'- or 3'- to 5'-direction to yield nucleoside 5'-phosphates.. Functionally, bidirectionally degrades single-stranded DNA into large acid-insoluble oligonucleotides, which are then degraded further into small acid-soluble oligonucleotides. The protein is Exodeoxyribonuclease 7 large subunit of Klebsiella pneumoniae subsp. pneumoniae (strain ATCC 700721 / MGH 78578).